Reading from the N-terminus, the 135-residue chain is ATP synthase epsilon chain (135 aa).

It belongs to the ATPase epsilon chain family. As to quaternary structure, F-type ATPases have 2 components, CF(1) - the catalytic core - and CF(0) - the membrane proton channel. CF(1) has five subunits: alpha(3), beta(3), gamma(1), delta(1), epsilon(1). CF(0) has three main subunits: a, b and c.

Its subcellular location is the cell inner membrane. Its function is as follows. Produces ATP from ADP in the presence of a proton gradient across the membrane. This Bradyrhizobium sp. (strain BTAi1 / ATCC BAA-1182) protein is ATP synthase epsilon chain.